The primary structure comprises 544 residues: Membrane protein insertase YidC (544 aa).

5 helical membrane-spanning segments follow: residues 6–26 (NLLL…WETD), 343–363 (KFLH…TFIV), 418–438 (LGGC…YYML), 456–476 (LSAQ…MFFI), and 497–517 (PVIF…YYIV).

This sequence belongs to the OXA1/ALB3/YidC family. Type 1 subfamily. In terms of assembly, interacts with the Sec translocase complex via SecD. Specifically interacts with transmembrane segments of nascent integral membrane proteins during membrane integration.

The protein resides in the cell inner membrane. Its function is as follows. Required for the insertion and/or proper folding and/or complex formation of integral membrane proteins into the membrane. Involved in integration of membrane proteins that insert both dependently and independently of the Sec translocase complex, as well as at least some lipoproteins. Aids folding of multispanning membrane proteins. This chain is Membrane protein insertase YidC, found in Pectobacterium atrosepticum (strain SCRI 1043 / ATCC BAA-672) (Erwinia carotovora subsp. atroseptica).